Consider the following 361-residue polypeptide: Ribosomal RNA large subunit methyltransferase M (361 aa).

S-adenosyl-L-methionine-binding positions include Ser-187, 220–223, Asp-239, Asp-259, and Asp-276; that span reads CPGG. Catalysis depends on Lys-305, which acts as the Proton acceptor.

The protein belongs to the class I-like SAM-binding methyltransferase superfamily. RNA methyltransferase RlmE family. RlmM subfamily. Monomer.

It is found in the cytoplasm. The catalysed reaction is cytidine(2498) in 23S rRNA + S-adenosyl-L-methionine = 2'-O-methylcytidine(2498) in 23S rRNA + S-adenosyl-L-homocysteine + H(+). In terms of biological role, catalyzes the 2'-O-methylation at nucleotide C2498 in 23S rRNA. The protein is Ribosomal RNA large subunit methyltransferase M of Shewanella sp. (strain W3-18-1).